The chain runs to 102 residues: RNA-binding protein Hfq (102 aa).

Positions 9 to 68 (DPFLNALRRERVPVSIYLVNGIKLQGQIESFDQFVILLKNTVSQMVYKHAISTVVPSRPV) constitute a Sm domain. The segment at 63 to 102 (VPSRPVSHHSNNASGGTSSNYHHGSSAQNTSAQQDSEETE) is disordered. A compositionally biased stretch (polar residues) spans 70 to 96 (HHSNNASGGTSSNYHHGSSAQNTSAQQ).

This sequence belongs to the Hfq family. In terms of assembly, homohexamer.

Its function is as follows. RNA chaperone that binds small regulatory RNA (sRNAs) and mRNAs to facilitate mRNA translational regulation in response to envelope stress, environmental stress and changes in metabolite concentrations. Also binds with high specificity to tRNAs. The polypeptide is RNA-binding protein Hfq (Shigella boydii serotype 18 (strain CDC 3083-94 / BS512)).